Here is a 276-residue protein sequence, read N- to C-terminus: Diaminopimelate epimerase (276 aa).

Residues asparagine 13, glutamine 46, and asparagine 66 each coordinate substrate. The active-site Proton donor is the cysteine 75. Substrate is bound by residues 76–77, asparagine 159, asparagine 192, and 210–211; these read GN and ER. The Proton acceptor role is filled by cysteine 219. Residue 220–221 participates in substrate binding; it reads GS.

It belongs to the diaminopimelate epimerase family. In terms of assembly, homodimer.

The protein localises to the cytoplasm. The enzyme catalyses (2S,6S)-2,6-diaminopimelate = meso-2,6-diaminopimelate. Its pathway is amino-acid biosynthesis; L-lysine biosynthesis via DAP pathway; DL-2,6-diaminopimelate from LL-2,6-diaminopimelate: step 1/1. Catalyzes the stereoinversion of LL-2,6-diaminopimelate (L,L-DAP) to meso-diaminopimelate (meso-DAP), a precursor of L-lysine and an essential component of the bacterial peptidoglycan. This chain is Diaminopimelate epimerase, found in Pseudoalteromonas atlantica (strain T6c / ATCC BAA-1087).